The following is a 515-amino-acid chain: DEP domain-containing protein 7 (515 aa).

Positions 27 to 118 (LQTQVEVKRR…SSCSLYRFLN (92 aa)) constitute a DEP domain. Residues 121–144 (TPSTSGSETIGSGYNTQRNTNSPP) are compositionally biased toward polar residues. The segment at 121–160 (TPSTSGSETIGSGYNTQRNTNSPPFQRMEDSAYSNNSPVK) is disordered.

This sequence belongs to the DEPDC7 family.

The sequence is that of DEP domain-containing protein 7 (depdc7) from Danio rerio (Zebrafish).